The chain runs to 253 residues: 1-(5-phosphoribosyl)-5-[(5-phosphoribosylamino)methylideneamino] imidazole-4-carboxamide isomerase (253 aa).

D11 functions as the Proton acceptor in the catalytic mechanism. D132 serves as the catalytic Proton donor.

Belongs to the HisA/HisF family.

Its subcellular location is the cytoplasm. The catalysed reaction is 1-(5-phospho-beta-D-ribosyl)-5-[(5-phospho-beta-D-ribosylamino)methylideneamino]imidazole-4-carboxamide = 5-[(5-phospho-1-deoxy-D-ribulos-1-ylimino)methylamino]-1-(5-phospho-beta-D-ribosyl)imidazole-4-carboxamide. It functions in the pathway amino-acid biosynthesis; L-histidine biosynthesis; L-histidine from 5-phospho-alpha-D-ribose 1-diphosphate: step 4/9. The chain is 1-(5-phosphoribosyl)-5-[(5-phosphoribosylamino)methylideneamino] imidazole-4-carboxamide isomerase from Methylobacterium nodulans (strain LMG 21967 / CNCM I-2342 / ORS 2060).